Consider the following 89-residue polypeptide: Small ribosomal subunit protein uS14A (89 aa).

This sequence belongs to the universal ribosomal protein uS14 family. As to quaternary structure, part of the 30S ribosomal subunit. Contacts proteins S3 and S10.

Its function is as follows. Binds 16S rRNA, required for the assembly of 30S particles and may also be responsible for determining the conformation of the 16S rRNA at the A site. This Streptococcus agalactiae serotype Ia (strain ATCC 27591 / A909 / CDC SS700) protein is Small ribosomal subunit protein uS14A.